Reading from the N-terminus, the 91-residue chain is Cell division topological specificity factor (91 aa).

It belongs to the MinE family.

Prevents the cell division inhibition by proteins MinC and MinD at internal division sites while permitting inhibition at polar sites. This ensures cell division at the proper site by restricting the formation of a division septum at the midpoint of the long axis of the cell. The sequence is that of Cell division topological specificity factor from Erwinia tasmaniensis (strain DSM 17950 / CFBP 7177 / CIP 109463 / NCPPB 4357 / Et1/99).